A 161-amino-acid polypeptide reads, in one-letter code: Small ribosomal subunit protein uS9 (161 aa).

Disordered stretches follow at residues 1 to 27 (MAQI…APKA) and 142 to 161 (KERK…FSKR).

This sequence belongs to the universal ribosomal protein uS9 family.

The protein is Small ribosomal subunit protein uS9 of Clavibacter michiganensis subsp. michiganensis (strain NCPPB 382).